The chain runs to 183 residues: Adenine phosphoribosyltransferase (183 aa).

It belongs to the purine/pyrimidine phosphoribosyltransferase family. Homodimer.

The protein resides in the cytoplasm. It catalyses the reaction AMP + diphosphate = 5-phospho-alpha-D-ribose 1-diphosphate + adenine. Its pathway is purine metabolism; AMP biosynthesis via salvage pathway; AMP from adenine: step 1/1. In terms of biological role, catalyzes a salvage reaction resulting in the formation of AMP, that is energically less costly than de novo synthesis. This Salmonella gallinarum (strain 287/91 / NCTC 13346) protein is Adenine phosphoribosyltransferase.